The chain runs to 647 residues: MITGKDMYDVLAAMVPLYVAMILAYGSVRWWGIFTPDQCSGINRFVAVFAVPLLSFHFISSNDPYAMNYHFLAADSLQKVVILAALFLWQAFSRRGSLEWMITLFSLSTLPNTLVMGIPLLRAMYGDFSGNLMVQIVVLQSIIWYTLMLFLFEFRGAKLLISEQFPETAGSITSFRVDSDVISLNGREPLQTDAEIGDDGKLHVVVRRSSAASSMISSFNKSHGGGLNSSMITPRASNLTGVEIYSVQSSREPTPRASSFNQTDFYAMFNASKAPSPRHGYTNSYGGAGAGPGGDVYSLQSSKGVTPRTSNFDEEVMKTAKKAGRGGRSMSGELYNNNSVPSYPPPNPMFTGSTSGASGVKKKESGGGGSGGGVGVGGQNKEMNMFVWSSSASPVSEANAKNAMTRGSSTDVSTDPKVSIPPHDNLATKAMQNLIENMSPGRKGHVEMDQDGNNGGKSPYMGKKGSDVEDGGPGPRKQQMPPASVMTRLILIMVWRKLIRNPNTYSSLFGLAWSLVSFKWNIKMPTIMSGSISILSDAGLGMAMFSLGLFMALQPKIIACGKSVAGFAMAVRFLTGPAVIAATSIAIGIRGDLLHIAIVQAALPQGIVPFVFAKEYNVHPDILSTAVIFGMLVALPVTVLYYVLLGL.

At 1 to 7 the chain is on the extracellular side; that stretch reads MITGKDM. Residues 8 to 28 traverse the membrane as a helical segment; it reads YDVLAAMVPLYVAMILAYGSV. Residues 29-38 are Cytoplasmic-facing; that stretch reads RWWGIFTPDQ. Residues 39-59 form a helical membrane-spanning segment; sequence CSGINRFVAVFAVPLLSFHFI. Valine 51 provides a ligand contact to (indol-3-yl)acetate. Topologically, residues 60–68 are extracellular; it reads SSNDPYAMN. The helical transmembrane segment at 69–89 threads the bilayer; it reads YHFLAADSLQKVVILAALFLW. Topologically, residues 90 to 100 are cytoplasmic; sequence QAFSRRGSLEW. Residues 101–121 form a helical membrane-spanning segment; the sequence is MITLFSLSTLPNTLVMGIPLL. Residues asparagine 112 and leucine 114 each coordinate (indol-3-yl)acetate. The Extracellular portion of the chain corresponds to 122-131; the sequence is RAMYGDFSGN. The helical transmembrane segment at 132-152 threads the bilayer; that stretch reads LMVQIVVLQSIIWYTLMLFLF. A (indol-3-yl)acetate-binding site is contributed by tyrosine 145. Residues 153–507 are Cytoplasmic-facing; sequence EFRGAKLLIS…LIRNPNTYSS (355 aa). Residues serine 237, serine 258, and serine 310 each carry the phosphoserine modification. The tract at residues 339-380 is disordered; it reads SVPSYPPPNPMFTGSTSGASGVKKKESGGGGSGGGVGVGGQN. A Phosphothreonine modification is found at threonine 354. Gly residues predominate over residues 366 to 378; sequence GGGGSGGGVGVGG. Residue serine 393 is modified to Phosphoserine. 2 disordered regions span residues 397–420 and 440–481; these read EANA…KVSI and PGRK…QQMP. Residues 508 to 528 form a helical membrane-spanning segment; sequence LFGLAWSLVSFKWNIKMPTIM. The Extracellular portion of the chain corresponds to 529–531; that stretch reads SGS. A helical membrane pass occupies residues 532 to 552; sequence ISILSDAGLGMAMFSLGLFMA. The Cytoplasmic portion of the chain corresponds to 553–568; sequence LQPKIIACGKSVAGFA. Residues 569-589 form a helical membrane-spanning segment; sequence MAVRFLTGPAVIAATSIAIGI. The Extracellular portion of the chain corresponds to 590–592; sequence RGD. The helical transmembrane segment at 593-613 threads the bilayer; the sequence is LLHIAIVQAALPQGIVPFVFA. The (indol-3-yl)acetate site is built by isoleucine 607 and valine 608. The Cytoplasmic portion of the chain corresponds to 614–626; sequence KEYNVHPDILSTA. Residues 627–647 traverse the membrane as a helical segment; the sequence is VIFGMLVALPVTVLYYVLLGL.

Belongs to the auxin efflux carrier (TC 2.A.69.1) family. As to quaternary structure, homodimer. Interacts with FYPP1 and FYPP3. Component of a complex made of PINs (e.g. PIN1 and PIN2), MAB4/MELs (e.g. NPY1/MAB4 and NPY5/MEL1) and AGC kinases (e.g. D6PK and PID) at the plasma membrane. Binds directly to NPY1/MAB4, NPY5/MEL1 and PID. In terms of tissue distribution, root-specific. Localized to the cortex, epidermis and lateral root cap, predominantly at the upper side of cells.

The protein localises to the cell membrane. Acts as a component of the auxin efflux carrier. Seems to be involved in the root-specific auxin transport, and mediates the root gravitropism. Its particular localization suggests a role in the translocation of auxin towards the elongation zone. Recrutes NPY proteins (e.g. NPY1/MAB4 and NPY5/MEL1) to the plasma membrane in a polar basal localization in root epidermis; this activity is optimized by AGC kinases-mediated (e.g. D6PK and PID) phosphorylation that limits their lateral diffusion-based escape. The polypeptide is Auxin efflux carrier component 2 (Arabidopsis thaliana (Mouse-ear cress)).